A 539-amino-acid polypeptide reads, in one-letter code: O-phosphoserine--tRNA(Cys) ligase (539 aa).

Substrate contacts are provided by residues 188 to 190 (HMT), 233 to 235 (SAS), 275 to 276 (YY), and N327.

Belongs to the class-II aminoacyl-tRNA synthetase family. O-phosphoseryl-tRNA(Cys) synthetase subfamily. In terms of assembly, homotetramer. Interacts with SepCysS.

It carries out the reaction tRNA(Cys) + O-phospho-L-serine + ATP = O-phospho-L-seryl-tRNA(Cys) + AMP + diphosphate. Catalyzes the attachment of O-phosphoserine (Sep) to tRNA(Cys). This Methanosarcina acetivorans (strain ATCC 35395 / DSM 2834 / JCM 12185 / C2A) protein is O-phosphoserine--tRNA(Cys) ligase.